A 548-amino-acid polypeptide reads, in one-letter code: Medium/long-chain-fatty-acid--CoA/3-oxocholest-4-en-26-oate--CoA ligase (548 aa).

Residues 174 to 182, Asp-415, Arg-430, and Lys-521 contribute to the ATP site; that span reads TGGTTGFPK. Over residues 520 to 541 the composition is skewed to basic and acidic residues; that stretch reads GKPDYRWAKEQTEARPADDVHA. The interval 520 to 548 is disordered; sequence GKPDYRWAKEQTEARPADDVHAGHVTSGG.

This sequence belongs to the ATP-dependent AMP-binding enzyme family.

The enzyme catalyses a medium-chain fatty acid + ATP + CoA = a medium-chain fatty acyl-CoA + AMP + diphosphate. It catalyses the reaction a long-chain fatty acid + ATP + CoA = a long-chain fatty acyl-CoA + AMP + diphosphate. The catalysed reaction is (25S)-3-oxocholest-4-en-26-oate + ATP + CoA = (25S)-3-oxocholest-4-en-26-oyl-CoA + AMP + diphosphate. It functions in the pathway lipid metabolism; fatty acid biosynthesis. The protein operates within steroid metabolism; cholesterol metabolism. Catalyzes the activation of medium/long-chain fatty acids as acyl-coenzyme A (acyl-CoA), which are then transferred to the multifunctional polyketide synthase (PKS) type III for further chain extension. Also involved in the degradation of cholesterol via the degradation of the side chains of C-24 branched-chain sterols. Catalyzes the ATP-dependent CoA thioesterification of the sterol 3-oxocholest-4-en-26-oate to yield 3-oxocholest-4-en-26-oyl-CoA. This Mycobacterium bovis (strain ATCC BAA-935 / AF2122/97) protein is Medium/long-chain-fatty-acid--CoA/3-oxocholest-4-en-26-oate--CoA ligase.